Consider the following 92-residue polypeptide: MARSLKKSPFVANHLLKKIEKLNMKGGKEIIVTWSRASTIIPTMIGHTIAIHNGKEHLPIYITDRMVGHKLGEFAPTLTFRGHARNDNRSRR.

This sequence belongs to the universal ribosomal protein uS19 family.

Its subcellular location is the plastid. It localises to the chloroplast. Functionally, protein S19 forms a complex with S13 that binds strongly to the 16S ribosomal RNA. The polypeptide is Small ribosomal subunit protein uS19c (Piper cenocladum (Ant piper)).